The chain runs to 497 residues: Probable cytosol aminopeptidase (497 aa).

Positions 263 and 268 each coordinate Mn(2+). Lys275 is an active-site residue. Mn(2+) is bound by residues Asp286, Asp345, and Glu347. Arg349 is an active-site residue.

This sequence belongs to the peptidase M17 family. The cofactor is Mn(2+).

It is found in the cytoplasm. The enzyme catalyses Release of an N-terminal amino acid, Xaa-|-Yaa-, in which Xaa is preferably Leu, but may be other amino acids including Pro although not Arg or Lys, and Yaa may be Pro. Amino acid amides and methyl esters are also readily hydrolyzed, but rates on arylamides are exceedingly low.. It catalyses the reaction Release of an N-terminal amino acid, preferentially leucine, but not glutamic or aspartic acids.. In terms of biological role, presumably involved in the processing and regular turnover of intracellular proteins. Catalyzes the removal of unsubstituted N-terminal amino acids from various peptides. The chain is Probable cytosol aminopeptidase from Brucella ovis (strain ATCC 25840 / 63/290 / NCTC 10512).